The primary structure comprises 129 residues: Replication initiation control protein YabA (129 aa).

Residues H103, C105, C119, and C122 each coordinate Zn(2+).

It belongs to the YabA family. Homotetramer. Interacts with both DnaA and DnaN, acting as a bridge between these two proteins. Zn(2+) is required as a cofactor.

The protein resides in the cytoplasm. The protein localises to the nucleoid. Its function is as follows. Involved in control of chromosome replication initiation. Inhibits the cooperative binding of DnaA to the oriC region, thus negatively regulating initiation of chromosome replication. Inhibits the ability of DnaA-ATP to form a helix on DNA; does not disassemble preformed DnaA-DNA helices. Decreases the residence time of DnaA on the chromosome at its binding sites (oriC, replication forks and promoter-binding sites). Tethers DnaA to the replication machinery via the DNA polymerase beta sliding clamp subunit (dnaN). Associates with oriC and other DnaA targets on the chromosome in a DnaA-dependent manner. This chain is Replication initiation control protein YabA, found in Listeria welshimeri serovar 6b (strain ATCC 35897 / DSM 20650 / CCUG 15529 / CIP 8149 / NCTC 11857 / SLCC 5334 / V8).